A 310-amino-acid polypeptide reads, in one-letter code: Major allergen Asp f 2 (310 aa).

The N-terminal stretch at Met1–Pro16 is a signal peptide. 4 N-linked (GlcNAc...) asparagine glycosylation sites follow: Asn57, Asn87, Asn143, and Asn216. A disordered region spans residues Ala247–Thr310. The segment covering Asp258–Thr292 has biased composition (low complexity). A compositionally biased stretch (basic and acidic residues) spans His300 to Thr310.

The protein belongs to the ZPS1 family.

It is found in the secreted. The sequence is that of Major allergen Asp f 2 from Aspergillus fumigatus (strain ATCC MYA-4609 / CBS 101355 / FGSC A1100 / Af293) (Neosartorya fumigata).